Here is a 208-residue protein sequence, read N- to C-terminus: Thymidylate kinase (208 aa).

ATP is bound at residue 10–17; it reads GPEGSGKT.

The protein belongs to the thymidylate kinase family.

The enzyme catalyses dTMP + ATP = dTDP + ADP. Its function is as follows. Phosphorylation of dTMP to form dTDP in both de novo and salvage pathways of dTTP synthesis. In Bacillus cereus (strain ATCC 14579 / DSM 31 / CCUG 7414 / JCM 2152 / NBRC 15305 / NCIMB 9373 / NCTC 2599 / NRRL B-3711), this protein is Thymidylate kinase.